We begin with the raw amino-acid sequence, 188 residues long: Elongation factor P (188 aa).

Lys34 bears the N6-(3,6-diaminohexanoyl)-5-hydroxylysine mark.

Belongs to the elongation factor P family. May be beta-lysylated on the epsilon-amino group of Lys-34 by the combined action of EpmA and EpmB, and then hydroxylated on the C5 position of the same residue by EpmC (if this protein is present). Lysylation is critical for the stimulatory effect of EF-P on peptide-bond formation. The lysylation moiety may extend toward the peptidyltransferase center and stabilize the terminal 3-CCA end of the tRNA. Hydroxylation of the C5 position on Lys-34 may allow additional potential stabilizing hydrogen-bond interactions with the P-tRNA.

The protein resides in the cytoplasm. It functions in the pathway protein biosynthesis; polypeptide chain elongation. Functionally, involved in peptide bond synthesis. Alleviates ribosome stalling that occurs when 3 or more consecutive Pro residues or the sequence PPG is present in a protein, possibly by augmenting the peptidyl transferase activity of the ribosome. Modification of Lys-34 is required for alleviation. This is Elongation factor P from Vibrio vulnificus (strain CMCP6).